The chain runs to 345 residues: Protein RecA (345 aa).

Gly-81–Thr-88 serves as a coordination point for ATP.

Belongs to the RecA family.

The protein resides in the cytoplasm. Its function is as follows. Can catalyze the hydrolysis of ATP in the presence of single-stranded DNA, the ATP-dependent uptake of single-stranded DNA by duplex DNA, and the ATP-dependent hybridization of homologous single-stranded DNAs. It interacts with LexA causing its activation and leading to its autocatalytic cleavage. The protein is Protein RecA of Mycoplasma mycoides.